The sequence spans 368 residues: 3-dehydroquinate synthase (368 aa).

Residues 76–81 (DGEQYK), 110–114 (GVIGD), 134–135 (TT), lysine 147, lysine 156, and 174–177 (CLKT) contribute to the NAD(+) site. Zn(2+) is bound by residues glutamate 189, histidine 252, and histidine 269.

The protein belongs to the sugar phosphate cyclases superfamily. Dehydroquinate synthase family. It depends on NAD(+) as a cofactor. Co(2+) is required as a cofactor. Zn(2+) serves as cofactor.

The protein resides in the cytoplasm. The enzyme catalyses 7-phospho-2-dehydro-3-deoxy-D-arabino-heptonate = 3-dehydroquinate + phosphate. It functions in the pathway metabolic intermediate biosynthesis; chorismate biosynthesis; chorismate from D-erythrose 4-phosphate and phosphoenolpyruvate: step 2/7. Catalyzes the conversion of 3-deoxy-D-arabino-heptulosonate 7-phosphate (DAHP) to dehydroquinate (DHQ). The sequence is that of 3-dehydroquinate synthase from Vibrio vulnificus (strain YJ016).